A 300-amino-acid chain; its full sequence is Tyrosine recombinase XerD (300 aa).

The 86-residue stretch at 5-90 folds into the Core-binding (CB) domain; sequence YQCDPLIDAF…SLRRFYNYLL (86 aa). In terms of domain architecture, Tyr recombinase spans 111–294; it reads HLPDSLSESQ…ARARLQELHQ (184 aa). Residues arginine 151, lysine 175, histidine 246, arginine 249, and histidine 272 contribute to the active site. The O-(3'-phospho-DNA)-tyrosine intermediate role is filled by tyrosine 281.

This sequence belongs to the 'phage' integrase family. XerD subfamily. In terms of assembly, forms a cyclic heterotetrameric complex composed of two molecules of XerC and two molecules of XerD.

Its subcellular location is the cytoplasm. Its function is as follows. Site-specific tyrosine recombinase, which acts by catalyzing the cutting and rejoining of the recombining DNA molecules. The XerC-XerD complex is essential to convert dimers of the bacterial chromosome into monomers to permit their segregation at cell division. It also contributes to the segregational stability of plasmids. The sequence is that of Tyrosine recombinase XerD from Shewanella oneidensis (strain ATCC 700550 / JCM 31522 / CIP 106686 / LMG 19005 / NCIMB 14063 / MR-1).